Consider the following 856-residue polypeptide: DNA mismatch repair protein MutS (856 aa).

605-612 (GPNMSGKS) contacts ATP.

It belongs to the DNA mismatch repair MutS family.

This protein is involved in the repair of mismatches in DNA. It is possible that it carries out the mismatch recognition step. This protein has a weak ATPase activity. The polypeptide is DNA mismatch repair protein MutS (Lysinibacillus sphaericus (strain C3-41)).